The chain runs to 557 residues: IgE-binding protein (557 aa).

The segment at 113–172 (DGLGKPALSSSEAGEESSSEETDWEEEAAHYQPANWSRKKPKAAGEGQFADWPQGSRLQG) is disordered. A compositionally biased stretch (acidic residues) spans 125–138 (AGEESSSEETDWEE). The region spanning 344-534 (TAIRPGRRSR…TAAERHVQSQ (191 aa)) is the Integrase catalytic domain.

The sequence is that of IgE-binding protein (Iap) from Mus musculus (Mouse).